We begin with the raw amino-acid sequence, 1072 residues long: E3 ubiquitin-protein ligase RNF31 (1072 aa).

Residues 1 to 485 (MPGEEEERAF…PEKQRQDKMR (485 aa)) are polyubiquitin-binding. Positions 71-142 (TLSTALNILE…SFPEGQEEPD (72 aa)) constitute a PUB domain. A disordered region spans residues 263–290 (QGTHLSPSLPASAQPRPQSTSLLALGDS). Over residues 265-280 (THLSPSLPASAQPRPQ) the composition is skewed to polar residues. Residues 281–290 (STSLLALGDS) show a composition bias toward low complexity. RanBP2-type zinc fingers lie at residues 299 to 329 (SAHLPWHCAACAMLNEPWAVLCVACDRPRGC) and 350 to 379 (ARGRWACQSCTFENEAAAVLCSICERPRLA). At Ser-383 the chain carries Phosphoserine. The RanBP2-type 3 zinc-finger motif lies at 409–438 (QSQVWYCIHCTFCNSSPGWVCVMCNRTSSP). The disordered stretch occupies residues 443 to 484 (HAPRPYASSLEKGPPKPGPPRRLSAPLPSSCGDPEKQRQDKM). Residues 463-472 (RRLSAPLPSS) show a composition bias toward low complexity. Ser-466 bears the Phosphoserine mark. A compositionally biased stretch (basic and acidic residues) spans 475–484 (DPEKQRQDKM). The segment at 563–616 (GNLDEAVEECVRTRRRKVQELQSLGFGPEEGSLQALFQHGGDVSRALTELQRQR) is interaction with RBCK1. Positions 564 to 615 (NLDEAVEECVRTRRRKVQELQSLGFGPEEGSLQALFQHGGDVSRALTELQRQ) constitute a UBA domain. Residues 695 to 929 (LAQECAVCGW…KSLHGHHPRD (235 aa)) form a TRIAD supradomain region. The Zn(2+) site is built by Cys-699, Cys-702, Cys-717, Cys-719, Cys-722, and Cys-725. Residues 699 to 749 (CAVCGWALPHNRMQALTSCECTICPDCFRQHFTIALKEKHITDMVCPACGR) form an RING-type 1 zinc finger. A (Microbial infection) Glycyl lysine isopeptide (Lys-Gly) (interchain with G-Cter in ubiquitin) cross-link involves residue Lys-735. Zn(2+) contacts are provided by Cys-744 and Cys-747. Residues 779–841 (ALFHKKLTEG…WEEQHRGRSC (63 aa)) form an IBR-type zinc finger. Lys-783 participates in a covalent cross-link: (Microbial infection) Glycyl lysine isopeptide (Lys-Gly) (interchain with G-Cter in ubiquitin). Zn(2+)-binding residues include Cys-799, Cys-802, Cys-817, Cys-820, Cys-825, Cys-828, His-836, Cys-841, Cys-871, and Cys-874. Residues 871 to 901 (CPKCKFSYALARGGCMHFHCTQCRHQFCSGC) form an RING-type 2; atypical zinc finger. Residue Lys-875 forms a (Microbial infection) Glycyl lysine isopeptide (Lys-Gly) (interchain with G-Cter in ubiquitin) linkage. Residue Cys-885 is part of the active site. Positions 890, 893, 898, 901, 916, and 925 each coordinate Zn(2+). The LDD domain stretch occupies residues 910-1072 (KCPEPNCRVK…LGQSIPRRRK (163 aa)).

Belongs to the RBR family. As to quaternary structure, component of the LUBAC complex (linear ubiquitin chain assembly complex) which consists of SHARPIN, RBCK1 and RNF31. LUBAC has a MW of approximately 600 kDa suggesting a heteromultimeric assembly of its subunits. Associates with the TNF-R1 signaling complex (TNF-RSC) in a stimulation-dependent manner. Interacts (via the PUB domain) with OTULIN (via the PIM motif); the interaction is direct. Interacts (via the PUB domain) with VCP (via the PIM motif). Interacts (via the PUB domain) with SPATA2 (via the PIM motif); interaction is direct and bridges RNF31 and CYLD. Interacts with CYLD; the interaction is indirect and is mediated via SPATA2. Interacts with MUSK. Interacts with CARD11, promoting linear ubiquitination of BCL10. (Microbial infection) Interacts with S.flexneri E3 ubiquitin-protein ligases IpaH1.4 and IpaH2.5, leading to its ubiquitination. Autoubiquitinated. Interaction with OTULIN is required to suppress formation of 'Met-1'-linked polyubiquitin chains and prevent subsequent inactivation of the LUBAC complex. Post-translationally, cleaved by caspase during apoptosis. In terms of processing, (Microbial infection) Ubiquitinated by S.flexneri E3 ubiquitin-protein ligases IpaH1.4 and IpaH2.5, leading to its degradation by the proteasome, thereby preventing formation of the bacterial ubiquitin coat and activation of innate immunity. As to expression, expressed in both normal and transformed breast epithelial cell lines.

It localises to the cytoplasm. It carries out the reaction [E2 ubiquitin-conjugating enzyme]-S-ubiquitinyl-L-cysteine + [acceptor protein]-L-lysine = [E2 ubiquitin-conjugating enzyme]-L-cysteine + [acceptor protein]-N(6)-ubiquitinyl-L-lysine.. It functions in the pathway protein modification; protein ubiquitination. E3 ubiquitin-protein ligase component of the LUBAC complex which conjugates linear ('Met-1'-linked) polyubiquitin chains to substrates and plays a key role in NF-kappa-B activation and regulation of inflammation. LUBAC conjugates linear polyubiquitin to IKBKG and RIPK1 and is involved in activation of the canonical NF-kappa-B and the JNK signaling pathways. Linear ubiquitination mediated by the LUBAC complex interferes with TNF-induced cell death and thereby prevents inflammation. LUBAC is recruited to the TNF-R1 signaling complex (TNF-RSC) following polyubiquitination of TNF-RSC components by BIRC2 and/or BIRC3 and to conjugate linear polyubiquitin to IKBKG and possibly other components contributing to the stability of the complex. The LUBAC complex is also involved in innate immunity by conjugating linear polyubiquitin chains at the surface of bacteria invading the cytosol to form the ubiquitin coat surrounding bacteria. LUBAC is not able to initiate formation of the bacterial ubiquitin coat, and can only promote formation of linear polyubiquitins on pre-existing ubiquitin. Recruited to the surface of bacteria by RNF213, which initiates the bacterial ubiquitin coat. The bacterial ubiquitin coat acts as an 'eat-me' signal for xenophagy and promotes NF-kappa-B activation. Together with OTULIN, the LUBAC complex regulates the canonical Wnt signaling during angiogenesis. RNF31 is required for linear ubiquitination of BCL10, thereby promoting TCR-induced NF-kappa-B activation. Binds polyubiquitin of different linkage types. The polypeptide is E3 ubiquitin-protein ligase RNF31 (Homo sapiens (Human)).